The chain runs to 182 residues: ATP-dependent protease subunit HslV (182 aa).

Thr-12 is an active-site residue. 3 residues coordinate Na(+): Gly-167, Cys-170, and Thr-173.

The protein belongs to the peptidase T1B family. HslV subfamily. As to quaternary structure, a double ring-shaped homohexamer of HslV is capped on each side by a ring-shaped HslU homohexamer. The assembly of the HslU/HslV complex is dependent on binding of ATP.

It localises to the cytoplasm. It carries out the reaction ATP-dependent cleavage of peptide bonds with broad specificity.. Its activity is regulated as follows. Allosterically activated by HslU binding. Its function is as follows. Protease subunit of a proteasome-like degradation complex believed to be a general protein degrading machinery. The polypeptide is ATP-dependent protease subunit HslV (Acidiphilium cryptum (strain JF-5)).